The primary structure comprises 251 residues: MRGNPLIHLLAISFLCILSMVYSQLCPAPCACPWTPPQCPPGVPLVLDGCGCCRVCARRLGESCDHLHVCDPSQGLVCQPGAGPSGRGAVCLFEEDDGSCEVNGRRYLDGETFKPNCRVLCRCDDGGFTCLPLCSEDVRLPSWDCPRPRRIQVPGRCCPEWVCDQAVMQPAIQPSSAQGHQLSALVTPASADGPCPNWSTAWGPCSTTCGLGIATRVSNQNRFCQLEIQRRLCLSRPCLASRSHGSWNSAF.

The first 23 residues, 1-23 (MRGNPLIHLLAISFLCILSMVYS), serve as a signal peptide directing secretion. Residues 24–103 (QLCPAPCACP…EEDDGSCEVN (80 aa)) form the IGFBP N-terminal domain. 6 disulfide bridges follow: C26–C50, C30–C52, C32–C53, C39–C56, C64–C78, and C70–C100. The region spanning 98 to 164 (GSCEVNGRRY…GRCCPEWVCD (67 aa)) is the VWFC domain. The TSP type-1 domain occupies 195-239 (CPNWSTAWGPCSTTCGLGIATRVSNQNRFCQLEIQRRLCLSRPCL). N197 carries an N-linked (GlcNAc...) asparagine glycan.

It belongs to the CCN family.

It is found in the secreted. May play an important role in modulating bone turnover. Promotes the adhesion of osteoblast cells and inhibits the binding of fibrinogen to integrin receptors. In addition, inhibits osteocalcin production. The polypeptide is CCN family member 5 (Ccn5) (Mus musculus (Mouse)).